The sequence spans 390 residues: GTPase Obg (390 aa).

In terms of domain architecture, Obg spans 1–159 (MKFVDEASIL…RELLLELMLL (159 aa)). The segment at 127–147 (NTRFKSSVNRTPRQKTNGTPG) is disordered. The span at 129–145 (RFKSSVNRTPRQKTNGT) shows a compositional bias: polar residues. In terms of domain architecture, OBG-type G spans 160–333 (ADVGMLGMPN…LCWDVMTFIL (174 aa)). GTP-binding positions include 166–173 (GMPNAGKS), 191–195 (FTTLV), 213–216 (DIPG), 283–286 (NKID), and 314–316 (SAA). Positions 173 and 193 each coordinate Mg(2+).

This sequence belongs to the TRAFAC class OBG-HflX-like GTPase superfamily. OBG GTPase family. In terms of assembly, monomer. It depends on Mg(2+) as a cofactor.

The protein localises to the cytoplasm. An essential GTPase which binds GTP, GDP and possibly (p)ppGpp with moderate affinity, with high nucleotide exchange rates and a fairly low GTP hydrolysis rate. Plays a role in control of the cell cycle, stress response, ribosome biogenesis and in those bacteria that undergo differentiation, in morphogenesis control. This Shigella sonnei (strain Ss046) protein is GTPase Obg.